A 993-amino-acid chain; its full sequence is UPF0182 protein ROP_64500 (993 aa).

7 helical membrane-spanning segments follow: residues 18-38, 63-83, 114-134, 174-194, 211-231, 260-280, and 288-308; these read VLLV…RLIS, LLLF…ALLL, LFGL…AQSS, WLFV…YIFG, VQLA…YWFD, KLIL…AIFL, and MATA…PLVV. A disordered region spans residues 904-948; sequence TGSVATAPSAEEGTPPETGTTPPVEQGAAPPAPTAPATPPSGTDV. A compositionally biased stretch (low complexity) spans 908–926; it reads ATAPSAEEGTPPETGTTPP. Residues 933–942 show a composition bias toward pro residues; sequence PPAPTAPATP.

The protein belongs to the UPF0182 family.

It localises to the cell membrane. The sequence is that of UPF0182 protein ROP_64500 from Rhodococcus opacus (strain B4).